The chain runs to 101 residues: NADH-quinone oxidoreductase subunit K (101 aa).

3 helical membrane-spanning segments follow: residues 4–24, 30–50, and 61–81; these read LGHY…GIFL, IVLL…FVAF, and VFVF…LAIL.

It belongs to the complex I subunit 4L family. In terms of assembly, NDH-1 is composed of 14 different subunits. Subunits NuoA, H, J, K, L, M, N constitute the membrane sector of the complex.

The protein resides in the cell inner membrane. It catalyses the reaction a quinone + NADH + 5 H(+)(in) = a quinol + NAD(+) + 4 H(+)(out). Functionally, NDH-1 shuttles electrons from NADH, via FMN and iron-sulfur (Fe-S) centers, to quinones in the respiratory chain. The immediate electron acceptor for the enzyme in this species is believed to be ubiquinone. Couples the redox reaction to proton translocation (for every two electrons transferred, four hydrogen ions are translocated across the cytoplasmic membrane), and thus conserves the redox energy in a proton gradient. This Leptothrix cholodnii (strain ATCC 51168 / LMG 8142 / SP-6) (Leptothrix discophora (strain SP-6)) protein is NADH-quinone oxidoreductase subunit K.